Here is a 594-residue protein sequence, read N- to C-terminus: Potassium-transporting ATPase potassium-binding subunit (594 aa).

A run of 10 helical transmembrane segments spans residues 3–23 (ADFL…APLL), 67–87 (AVAM…LQRL), 136–156 (ALTV…IALV), 179–199 (LYVL…QGVV), 287–307 (LEML…GEMV), 314–334 (VAIL…AAYF), 415–435 (GLYG…LMIG), 453–473 (VALV…VAVL), 519–539 (VLLG…ILAL), and 562–582 (LFVA…YVPA).

This sequence belongs to the KdpA family. As to quaternary structure, the system is composed of three essential subunits: KdpA, KdpB and KdpC.

It localises to the cell inner membrane. Part of the high-affinity ATP-driven potassium transport (or Kdp) system, which catalyzes the hydrolysis of ATP coupled with the electrogenic transport of potassium into the cytoplasm. This subunit binds the periplasmic potassium ions and delivers the ions to the membrane domain of KdpB through an intramembrane tunnel. This is Potassium-transporting ATPase potassium-binding subunit from Bordetella parapertussis (strain 12822 / ATCC BAA-587 / NCTC 13253).